A 317-amino-acid chain; its full sequence is Zinc finger protein CRM3 (317 aa).

Over residues 1–15 (MNFSLSKQSSEKQSS) the composition is skewed to low complexity. The segment at 1-22 (MNFSLSKQSSEKQSSYTDKSRS) is disordered. 2 C2H2-type zinc fingers span residues 254 to 276 (KQCPVCGKICSRPSTLKTHYLIH) and 282 to 306 (FKCTWEGCTKSFNVKSNMLRHLKSH).

The protein localises to the nucleus. Its function is as follows. Probable transcription factor involved in the regulation of the transcription of genes involved in cell rescue and defense, as well as cell cycle and DNA processing. The protein is Zinc finger protein CRM3 of Saccharomyces cerevisiae (strain ATCC 204508 / S288c) (Baker's yeast).